The following is a 232-amino-acid chain: MANPKVFFDLTVDGKPAGRIVIELFADLTPRTAENFRGLCTGERGIGKCGKPIHYKGSTFDHIVPDLMWCGGDIIFENEPIHSEELDDEYFILNHEDGPGIISMADSNGSQFQIHMKDYGLQVDGDHVVIGKVVEGLDLMRNIEKEVITTTTRTPSKPVVIADCGELSDYRSERCYLMKNIEKEVIIKTAKDNKPVVIADCGGLSDDRSERYYLINIVVACMVLMCFWSWFV.

One can recognise a PPIase cyclophilin-type domain in the interval 7–166 (FFDLTVDGKP…KPVVIADCGE (160 aa)). Residue Asn108 is glycosylated (N-linked (GlcNAc...) asparagine). Residues 212 to 232 (YYLINIVVACMVLMCFWSWFV) traverse the membrane as a helical segment.

Belongs to the cyclophilin-type PPIase family. As to expression, expressed only in flowers.

Its subcellular location is the membrane. The enzyme catalyses [protein]-peptidylproline (omega=180) = [protein]-peptidylproline (omega=0). PPIases accelerate the folding of proteins. It catalyzes the cis-trans isomerization of proline imidic peptide bonds in oligopeptides. The protein is Peptidyl-prolyl cis-trans isomerase CYP26-1 (CYP26-1) of Arabidopsis thaliana (Mouse-ear cress).